Reading from the N-terminus, the 118-residue chain is Basic phospholipase A2 CM-III (118 aa).

7 cysteine pairs are disulfide-bonded: Cys11–Cys70, Cys26–Cys117, Cys28–Cys44, Cys43–Cys98, Cys50–Cys91, Cys59–Cys84, and Cys77–Cys89. 3 residues coordinate Ca(2+): Tyr27, Gly29, and Gly31. The active site involves His47. Asp48 contacts Ca(2+). The Coagulation factor Xa binding motif signature appears at Glu52–Lys69. The active site involves Asp92.

The protein belongs to the phospholipase A2 family. Group I subfamily. D49 sub-subfamily. The cofactor is Ca(2+). In terms of tissue distribution, expressed by the venom gland.

It localises to the secreted. It carries out the reaction a 1,2-diacyl-sn-glycero-3-phosphocholine + H2O = a 1-acyl-sn-glycero-3-phosphocholine + a fatty acid + H(+). In terms of biological role, snake venom phospholipase A2 (PLA2) that shows several activities. It shows strong anticoagulant activity, probably by binding to coagulation factor Xa (F10) and inhibiting the formation of the prothrombinase complex, shows direct hemolytic action, causes neuromuscular blockade with a gradual contracture and a decreased sensitivity to ACh and KCl, abolishes twitches evoked by indirect stimulation earlier than those by direct stimulation (in the mouse phrenic nerve-diaphragm preparation), and causes myonecrosis when injected intramuscularly. PLA2 catalyzes the calcium-dependent hydrolysis of the 2-acyl groups in 3-sn-phosphoglycerides. This Naja mossambica (Mozambique spitting cobra) protein is Basic phospholipase A2 CM-III.